We begin with the raw amino-acid sequence, 156 residues long: Rhodanese-like domain-containing protein 17 (156 aa).

A Rhodanese domain is found at 44 to 146; the sequence is LDSGYTFLDV…WVNKRFPVKV (103 aa). Catalysis depends on Cys-106, which acts as the Cysteine persulfide intermediate.

This Arabidopsis thaliana (Mouse-ear cress) protein is Rhodanese-like domain-containing protein 17 (STR17).